A 65-amino-acid polypeptide reads, in one-letter code: Putative beta-neurotoxin RjAa4 (65 aa).

An LCN-type CS-alpha/beta domain is found at 1–64 (KEGYPMGRDG…VWDSSTNKCG (64 aa)). 4 disulfides stabilise this stretch: C11/C63, C15/C37, C22/C44, and C26/C46.

It belongs to the long (4 C-C) scorpion toxin superfamily. Sodium channel inhibitor family. Beta subfamily. As to expression, expressed by the venom gland.

The protein resides in the secreted. Its function is as follows. Beta toxins bind voltage-independently at site-4 of sodium channels (Nav) and shift the voltage of activation toward more negative potentials thereby affecting sodium channel activation and promoting spontaneous and repetitive firing. This chain is Putative beta-neurotoxin RjAa4, found in Rhopalurus junceus (Caribbean blue scorpion).